Here is a 305-residue protein sequence, read N- to C-terminus: Methionyl-tRNA formyltransferase (305 aa).

(6S)-5,6,7,8-tetrahydrofolate is bound at residue 109–112 (SLLP).

It belongs to the Fmt family.

It catalyses the reaction L-methionyl-tRNA(fMet) + (6R)-10-formyltetrahydrofolate = N-formyl-L-methionyl-tRNA(fMet) + (6S)-5,6,7,8-tetrahydrofolate + H(+). Functionally, attaches a formyl group to the free amino group of methionyl-tRNA(fMet). The formyl group appears to play a dual role in the initiator identity of N-formylmethionyl-tRNA by promoting its recognition by IF2 and preventing the misappropriation of this tRNA by the elongation apparatus. The chain is Methionyl-tRNA formyltransferase from Roseobacter denitrificans (strain ATCC 33942 / OCh 114) (Erythrobacter sp. (strain OCh 114)).